A 146-amino-acid polypeptide reads, in one-letter code: 3-dehydroquinate dehydratase (146 aa).

The active-site Proton acceptor is the Tyr-22. Substrate-binding residues include Asn-73, His-79, and Asp-86. The active-site Proton donor is His-99. Residues 100-101 and Arg-110 each bind substrate; that span reads LS.

The protein belongs to the type-II 3-dehydroquinase family. As to quaternary structure, homododecamer.

The catalysed reaction is 3-dehydroquinate = 3-dehydroshikimate + H2O. It participates in metabolic intermediate biosynthesis; chorismate biosynthesis; chorismate from D-erythrose 4-phosphate and phosphoenolpyruvate: step 3/7. Its function is as follows. Catalyzes a trans-dehydration via an enolate intermediate. This Parasynechococcus marenigrum (strain WH8102) protein is 3-dehydroquinate dehydratase.